Here is a 300-residue protein sequence, read N- to C-terminus: Protease HtpX homolog (300 aa).

Transmembrane regions (helical) follow at residues Ile5–Leu25 and Thr41–Ser61. Residue His146 participates in Zn(2+) binding. Glu147 is a catalytic residue. A Zn(2+)-binding site is contributed by His150. 2 helical membrane-spanning segments follow: residues Leu161 to Val181 and Ile196 to Ile216. Glu225 contributes to the Zn(2+) binding site.

The protein belongs to the peptidase M48B family. It depends on Zn(2+) as a cofactor.

The protein resides in the cell inner membrane. The polypeptide is Protease HtpX homolog (Methylacidiphilum infernorum (isolate V4) (Methylokorus infernorum (strain V4))).